Reading from the N-terminus, the 316-residue chain is DMOA farnesyltransferase nvfB (316 aa).

Transmembrane regions (helical) follow at residues 47 to 67 (VVGV…TILL), 71 to 91 (LILV…NDVI), 115 to 135 (WNAV…LSFL), 139 to 159 (CAIE…GKRF), 162 to 182 (FPQL…HSLG), 191 to 211 (PTFF…VVYS), 234 to 254 (IELL…AAGY), 258 to 278 (LGIP…LYFL), and 294 to 314 (KLAC…EYYL).

It belongs to the UbiA prenyltransferase family.

The protein resides in the membrane. It catalyses the reaction 3,5-dimethylorsellinate + (2E,6E)-farnesyl diphosphate = (3R)-3-farnesyl-6-hydroxy-2,3,5-trimethyl-4-oxocyclohexa-1,5-diene-1-carboxylate + diphosphate + H(+). It functions in the pathway secondary metabolite biosynthesis; terpenoid biosynthesis. DMOA farnesyltransferase; part of the gene cluster that mediates the biosynthesis of novofumigatonin, a heavily oxygenated meroterpenoid containing a unique orthoester moiety. The first step of the pathway is the synthesis of 3,5-dimethylorsellinic acid (DMOA) by the polyketide synthase nvfA via condensation of one acetyl-CoA starter unit with 3 malonyl-CoA units and 2 methylations. DMOA is then converted to farnesyl-DMOA by the farnesyltransferase nvfB. Epoxydation by FAD-dependent monooxygenase nvfK, followed by a protonation-initiated cyclization catalyzed by the terpene cyclase nvfL leads to the production of asnavolin H. The short chain dehydrogenase nvfC then as a 3-OH dehydrogenase of asnovolin H to yield chemesin D. There are two branches to synthesize asnovolin A from chemesin D. In one branch, chemesin D undergoes Baeyer-Villiger oxidation by nvfH, methylation by nvfJ, and enoyl reduction by the nvfM D enoylreductase that reduces the double bond between C-5'and C-6', to form respectively asnovolin I, asnovolin K, and asnovolin A. In the other branch, the methylation precedes the Baeyer-Villiger oxidation and the enoyl reduction to yield asnovolin A via the asnovolin J intermediate. Asnovolin A is further converted to fumigatonoid A by the Fe(II)/2-oxoglutarate-dependent dioxygenase nvfI that catalyzes an endoperoxidation reaction. The alpha/beta hydrolase nvfD then acts as an epimerase that converts fumigatonoid A to its C-5' epimer, which then undergoes spontaneous or nvfD-catalyzed lactonization. The following step utilizes the ketoreductase nvfG to produce fumigatonoid B. The dioxygenase nvfE further converts fumigatonoid B into fumigatonoid C. Finally the Fe(II)/2-oxoglutarate-dependent dioxygenase nvfF catalyzes two rounds of oxidation to transform fumigatonoid C into the end product, novofumigatonin A. This is DMOA farnesyltransferase nvfB from Aspergillus novofumigatus (strain IBT 16806).